A 638-amino-acid polypeptide reads, in one-letter code: 1-deoxy-D-xylulose-5-phosphate synthase (638 aa).

Thiamine diphosphate contacts are provided by residues H75 and 116–118 (AHS). D147 contributes to the Mg(2+) binding site. Thiamine diphosphate contacts are provided by residues 148–149 (GA), N177, Y288, and E370. A Mg(2+)-binding site is contributed by N177.

The protein belongs to the transketolase family. DXPS subfamily. Homodimer. Mg(2+) serves as cofactor. The cofactor is thiamine diphosphate.

The catalysed reaction is D-glyceraldehyde 3-phosphate + pyruvate + H(+) = 1-deoxy-D-xylulose 5-phosphate + CO2. It participates in metabolic intermediate biosynthesis; 1-deoxy-D-xylulose 5-phosphate biosynthesis; 1-deoxy-D-xylulose 5-phosphate from D-glyceraldehyde 3-phosphate and pyruvate: step 1/1. Catalyzes the acyloin condensation reaction between C atoms 2 and 3 of pyruvate and glyceraldehyde 3-phosphate to yield 1-deoxy-D-xylulose-5-phosphate (DXP). In Cupriavidus pinatubonensis (strain JMP 134 / LMG 1197) (Cupriavidus necator (strain JMP 134)), this protein is 1-deoxy-D-xylulose-5-phosphate synthase.